The following is a 470-amino-acid chain: Putative multidrug resistance protein MdtD (470 aa).

At 1–11 the chain is on the periplasmic side; that stretch reads MTEFPDNTRWQ. The helical transmembrane segment at 12-32 threads the bilayer; it reads LWIVAFGFFMQSLDTTIVNTA. Topologically, residues 33–48 are cytoplasmic; sequence LPSMAKSLGESPLHMH. Residues 49 to 69 form a helical membrane-spanning segment; that stretch reads MVVVSYVLTVAVMLPASGWLA. Residues 70 to 76 are Periplasmic-facing; it reads DKIGVRN. The chain crosses the membrane as a helical span at residues 77 to 97; that stretch reads IFFAAIVLFTLGSLFCALSGT. At 98-101 the chain is on the cytoplasmic side; sequence LNQL. Residues 102 to 124 form a helical membrane-spanning segment; sequence VLARVLQGVGGAMMVPVGRLTVM. At 125–137 the chain is on the periplasmic side; sequence KIVPRAQYMAAMT. The helical transmembrane segment at 138–158 threads the bilayer; it reads FVALPGQIGPLLGPALGGVLV. Over 159-164 the chain is Cytoplasmic; it reads EYASWH. The helical transmembrane segment at 165–185 threads the bilayer; the sequence is WIFLINIPVGIVGAMATFMLM. Residues 186–196 lie on the Periplasmic side of the membrane; that stretch reads PNYTIETRRFD. The helical transmembrane segment at 197-217 threads the bilayer; it reads LPGFLLLAIGMAVLTLALDGS. The Cytoplasmic portion of the chain corresponds to 218–224; that stretch reads KSMGISP. Residues 225–245 form a helical membrane-spanning segment; sequence WTLAGLAAGGAAAILLYLFHA. The Periplasmic segment spans residues 246 to 262; that stretch reads KKNSGALFSLRLFRTPT. Residues 263 to 283 traverse the membrane as a helical segment; sequence FSLGLLGSFAGRIGSGMLPFM. Residues 284–285 are Cytoplasmic-facing; sequence TP. The helical transmembrane segment at 286–306 threads the bilayer; it reads VFLQIGLGFSPFHAGLMMIPM. Over 307–341 the chain is Periplasmic; sequence VLGSMGMKRIVVQIVNRFGYRRVLVATTLGLALVS. Residues 342–362 traverse the membrane as a helical segment; the sequence is LLFMSVALLGWYYLLPLVLLL. Residues 363 to 395 lie on the Cytoplasmic side of the membrane; sequence QGMVNSARFSSMNTLTLKDLPDTLASSGNSLLS. The chain crosses the membrane as a helical span at residues 396–416; the sequence is MIMQLSMSIGVTIAGMLLGMF. The Periplasmic portion of the chain corresponds to 417 to 430; the sequence is GQQHIGIDSSATHH. The chain crosses the membrane as a helical span at residues 431–451; that stretch reads VFMYTWLCMAVIIALPAIIFA. The Cytoplasmic segment spans residues 452–470; that stretch reads RVPNDTQQNMVISRRKRSL.

The protein belongs to the major facilitator superfamily. TCR/Tet family.

Its subcellular location is the cell inner membrane. This Salmonella typhi protein is Putative multidrug resistance protein MdtD.